Consider the following 148-residue polypeptide: UPF0134 protein MPN_410 (148 aa).

This sequence belongs to the UPF0134 family.

The chain is UPF0134 protein MPN_410 from Mycoplasma pneumoniae (strain ATCC 29342 / M129 / Subtype 1) (Mycoplasmoides pneumoniae).